A 488-amino-acid polypeptide reads, in one-letter code: ATP synthase subunit beta (488 aa).

Residue 164 to 171 coordinates ATP; that stretch reads GGAGVGKT.

Belongs to the ATPase alpha/beta chains family. F-type ATPases have 2 components, CF(1) - the catalytic core - and CF(0) - the membrane proton channel. CF(1) has five subunits: alpha(3), beta(3), gamma(1), delta(1), epsilon(1). CF(0) has four main subunits: a(1), b(1), b'(1) and c(9-12).

The protein resides in the cellular thylakoid membrane. The enzyme catalyses ATP + H2O + 4 H(+)(in) = ADP + phosphate + 5 H(+)(out). In terms of biological role, produces ATP from ADP in the presence of a proton gradient across the membrane. The catalytic sites are hosted primarily by the beta subunits. The sequence is that of ATP synthase subunit beta from Prochlorococcus marinus (strain NATL1A).